We begin with the raw amino-acid sequence, 384 residues long: 3,7-dimethylxanthine N-methyltransferase 2 (384 aa).

S-adenosyl-L-homocysteine contacts are provided by Y18, C61, N66, D100, L101, S139, F140, and C156. Y157 contributes to the theobromine binding site. An S-adenosyl-L-homocysteine-binding site is contributed by C158. Positions 160 and 161 each coordinate theobromine. Position 178 (N178) interacts with Mg(2+). Theobromine is bound at residue S237. Positions 260, 262, and 263 each coordinate Mg(2+). A theobromine-binding site is contributed by Y368.

It belongs to the methyltransferase superfamily. Type-7 methyltransferase family. The cofactor is Mg(2+). As to expression, highly expressed in developing endosperm. Detected in young leaves and flower buds. Present in immature fruits (grains), but barely in mature fruits.

The enzyme catalyses 7-methylxanthine + S-adenosyl-L-methionine = theobromine + S-adenosyl-L-homocysteine + H(+). The catalysed reaction is theobromine + S-adenosyl-L-methionine = caffeine + S-adenosyl-L-homocysteine + H(+). It catalyses the reaction 1,7-dimethylxanthine + S-adenosyl-L-methionine = caffeine + S-adenosyl-L-homocysteine + H(+). It participates in alkaloid biosynthesis. Functionally, involved in the biosynthesis of caffeine. Catalyzes the conversion of 7-methylxanthine (7mX) to theobromine and of theobromine to caffeine. Has 1-N-methylation activity. This Coffea arabica (Arabian coffee) protein is 3,7-dimethylxanthine N-methyltransferase 2.